A 177-amino-acid polypeptide reads, in one-letter code: NAD(P)H-quinone oxidoreductase subunit 6, chloroplastic (177 aa).

5 helical membrane-spanning segments follow: residues 10 to 30 (FLLVFLGLGFIMGGLGVVLLT), 32 to 52 (PIFSAFSLGLVLVCTSLFYTP), 61 to 81 (AQLLIYVGAINVLIIFAVMFM), 92 to 112 (LWTVGDGVTSLVCTSIFVSLI), and 152 to 172 (FFLPFELISIILLVALIGAIS).

Belongs to the complex I subunit 6 family. As to quaternary structure, NDH is composed of at least 16 different subunits, 5 of which are encoded in the nucleus.

The protein resides in the plastid. The protein localises to the chloroplast thylakoid membrane. It catalyses the reaction a plastoquinone + NADH + (n+1) H(+)(in) = a plastoquinol + NAD(+) + n H(+)(out). The enzyme catalyses a plastoquinone + NADPH + (n+1) H(+)(in) = a plastoquinol + NADP(+) + n H(+)(out). In terms of biological role, NDH shuttles electrons from NAD(P)H:plastoquinone, via FMN and iron-sulfur (Fe-S) centers, to quinones in the photosynthetic chain and possibly in a chloroplast respiratory chain. The immediate electron acceptor for the enzyme in this species is believed to be plastoquinone. Couples the redox reaction to proton translocation, and thus conserves the redox energy in a proton gradient. In Ranunculus macranthus (Large buttercup), this protein is NAD(P)H-quinone oxidoreductase subunit 6, chloroplastic (ndhG).